Consider the following 457-residue polypeptide: Argininosuccinate lyase (457 aa).

The protein belongs to the lyase 1 family. Argininosuccinate lyase subfamily.

It localises to the cytoplasm. The catalysed reaction is 2-(N(omega)-L-arginino)succinate = fumarate + L-arginine. Its pathway is amino-acid biosynthesis; L-arginine biosynthesis; L-arginine from L-ornithine and carbamoyl phosphate: step 3/3. This chain is Argininosuccinate lyase, found in Escherichia coli O157:H7 (strain EC4115 / EHEC).